The primary structure comprises 932 residues: Transcriptional regulatory protein DagR (932 aa).

In terms of domain architecture, Sigma-54 factor interaction spans 111–343; sequence LIGYDRSLRD…LKSDIQFLCA (233 aa). Residues 141 to 148 and 210 to 219 contribute to the ATP site; these read GPSGVGKT and ADGGYLLLDE. One can recognise a PRD 1 domain in the interval 462 to 567; that stretch reads RYGDQIEERV…KECRHYRQRI (106 aa). At His-497 the chain carries Phosphohistidine. The region spanning 572-708 is the PTS EIIA type-4 domain; the sequence is DCGVILIAHG…PQQENGGKVL (137 aa). The active-site Tele-phosphohistidine intermediate is His-580. The PRD 2 domain maps to 835 to 932; that stretch reads LNPQRILKEM…YFYIYELLYS (98 aa). Residue His-870 is modified to Phosphohistidine.

Functionally, involved in the regulation of the catabolism of D-glucosaminate. This Salmonella typhimurium (strain 14028s / SGSC 2262) protein is Transcriptional regulatory protein DagR (dgaR).